The following is a 520-amino-acid chain: 3-phosphoshikimate 1-carboxyvinyltransferase, chloroplastic (520 aa).

The N-terminal 76 residues, Met1–Glu76, are a transit peptide targeting the chloroplast. The disordered stretch occupies residues Leu20–His39. 3 residues coordinate 3-phosphoshikimate: Lys99, Ser100, and Arg104. Lys99 provides a ligand contact to phosphoenolpyruvate. Phosphoenolpyruvate contacts are provided by Gly177 and Arg207. Positions 254, 255, 256, 282, 407, and 434 each coordinate 3-phosphoshikimate. Gln256 serves as a coordination point for phosphoenolpyruvate. The Proton acceptor role is filled by Asp407. Phosphoenolpyruvate-binding residues include Arg438, Arg480, and Lys505.

It belongs to the EPSP synthase family.

It localises to the plastid. The protein localises to the chloroplast. The enzyme catalyses 3-phosphoshikimate + phosphoenolpyruvate = 5-O-(1-carboxyvinyl)-3-phosphoshikimate + phosphate. It functions in the pathway metabolic intermediate biosynthesis; chorismate biosynthesis; chorismate from D-erythrose 4-phosphate and phosphoenolpyruvate: step 6/7. Catalyzes the transfer of the enolpyruvyl moiety of phosphoenolpyruvate (PEP) to the 5-hydroxyl of shikimate-3-phosphate (S3P) to produce enolpyruvyl shikimate-3-phosphate and inorganic phosphate. This is 3-phosphoshikimate 1-carboxyvinyltransferase, chloroplastic from Arabidopsis thaliana (Mouse-ear cress).